A 269-amino-acid polypeptide reads, in one-letter code: 4-hydroxy-tetrahydrodipicolinate reductase (269 aa).

NAD(+) contacts are provided by residues 11 to 16 (GASGRM) and Glu37. Arg38 is an NADP(+) binding site. Residues 101-103 (GTT) and 125-128 (AGNM) contribute to the NAD(+) site. Catalysis depends on His158, which acts as the Proton donor/acceptor. His159 contacts (S)-2,3,4,5-tetrahydrodipicolinate. Lys162 serves as the catalytic Proton donor. Position 168–169 (168–169 (GT)) interacts with (S)-2,3,4,5-tetrahydrodipicolinate.

It belongs to the DapB family.

It localises to the cytoplasm. It carries out the reaction (S)-2,3,4,5-tetrahydrodipicolinate + NAD(+) + H2O = (2S,4S)-4-hydroxy-2,3,4,5-tetrahydrodipicolinate + NADH + H(+). It catalyses the reaction (S)-2,3,4,5-tetrahydrodipicolinate + NADP(+) + H2O = (2S,4S)-4-hydroxy-2,3,4,5-tetrahydrodipicolinate + NADPH + H(+). It participates in amino-acid biosynthesis; L-lysine biosynthesis via DAP pathway; (S)-tetrahydrodipicolinate from L-aspartate: step 4/4. In terms of biological role, catalyzes the conversion of 4-hydroxy-tetrahydrodipicolinate (HTPA) to tetrahydrodipicolinate. This chain is 4-hydroxy-tetrahydrodipicolinate reductase, found in Cereibacter sphaeroides (strain ATCC 17023 / DSM 158 / JCM 6121 / CCUG 31486 / LMG 2827 / NBRC 12203 / NCIMB 8253 / ATH 2.4.1.) (Rhodobacter sphaeroides).